The chain runs to 721 residues: Peptide-N(4)-(N-acetyl-beta-glucosaminyl)asparagine amidase (721 aa).

Zn(2+) is bound by residues C193, C196, C225, and C228. The active-site Nucleophile is C251. Residues H278 and D295 contribute to the active site.

This sequence belongs to the transglutaminase-like superfamily. PNGase family. Zn(2+) serves as cofactor.

The protein localises to the cytoplasm. It catalyses the reaction Hydrolysis of an N(4)-(acetyl-beta-D-glucosaminyl)asparagine residue in which the glucosamine residue may be further glycosylated, to yield a (substituted) N-acetyl-beta-D-glucosaminylamine and a peptide containing an aspartate residue.. Functionally, specifically deglycosylates the denatured form of N-linked glycoproteins in the cytoplasm and assists their proteasome-mediated degradation. Cleaves the beta-aspartyl-glucosamine (GlcNAc) of the glycan and the amide side chain of Asn, converting Asn to Asp. Prefers proteins containing high-mannose over those bearing complex type oligosaccharides. Can recognize misfolded proteins in the endoplasmic reticulum that are exported to the cytosol to be destroyed and deglycosylate them, while it has no activity toward native proteins. Deglycosylation is a prerequisite for subsequent proteasome-mediated degradation of some, but not all, misfolded glycoproteins. This chain is Peptide-N(4)-(N-acetyl-beta-glucosaminyl)asparagine amidase (PNG1), found in Arabidopsis thaliana (Mouse-ear cress).